The following is a 1044-amino-acid chain: Isoleucine--tRNA ligase (1044 aa).

Residues 48–58 carry the 'HIGH' region motif; sequence PFATGLPHFGH. The 'KMSKS' region signature appears at 594–598; it reads KMSKS. Lys-597 lines the ATP pocket.

It belongs to the class-I aminoacyl-tRNA synthetase family. IleS type 2 subfamily. As to quaternary structure, monomer. The cofactor is Zn(2+).

Its subcellular location is the cytoplasm. The catalysed reaction is tRNA(Ile) + L-isoleucine + ATP = L-isoleucyl-tRNA(Ile) + AMP + diphosphate. Its function is as follows. Catalyzes the attachment of isoleucine to tRNA(Ile). As IleRS can inadvertently accommodate and process structurally similar amino acids such as valine, to avoid such errors it has two additional distinct tRNA(Ile)-dependent editing activities. One activity is designated as 'pretransfer' editing and involves the hydrolysis of activated Val-AMP. The other activity is designated 'posttransfer' editing and involves deacylation of mischarged Val-tRNA(Ile). The polypeptide is Isoleucine--tRNA ligase (Borrelia hermsii (strain HS1 / DAH)).